A 279-amino-acid chain; its full sequence is Large ribosomal subunit protein uL2 (279 aa).

Disordered stretches follow at residues 32–53 and 225–279; these read SLLR…TTRH and AMNP…KKRK. Residues 253–268 are compositionally biased toward basic and acidic residues; sequence KEGRTRHINKPSDKLI. The span at 269-279 shows a compositional bias: basic residues; it reads VRRRNAGKKRK.

The protein belongs to the universal ribosomal protein uL2 family. Part of the 50S ribosomal subunit. Forms a bridge to the 30S subunit in the 70S ribosome.

One of the primary rRNA binding proteins. Required for association of the 30S and 50S subunits to form the 70S ribosome, for tRNA binding and peptide bond formation. It has been suggested to have peptidyltransferase activity; this is somewhat controversial. Makes several contacts with the 16S rRNA in the 70S ribosome. The polypeptide is Large ribosomal subunit protein uL2 (Clavibacter michiganensis subsp. michiganensis (strain NCPPB 382)).